A 178-amino-acid chain; its full sequence is MHLFTQTLVRFSSLIADGGVSFNPDIFETNVVNLAILTGGIFYLGSNALSESLVERQQKILGAIQEAEERLEQATERLKESKTQLEQAQLVIASIKEDAETTAKQVKSAILTEGKNEIERLTSAAKSQIVTIEAQVRKQISDYVVSLALQRVTLQLEGKLSDAAQQQILDRNISKLKD.

Residues Leu34–Ser50 traverse the membrane as a helical segment.

Belongs to the ATPase B chain family. In terms of assembly, F-type ATPases have 2 components, F(1) - the catalytic core - and F(0) - the membrane proton channel. F(1) has five subunits: alpha(3), beta(3), gamma(1), delta(1), epsilon(1). F(0) has four main subunits: a(1), b(1), b'(1) and c(10-14). The alpha and beta chains form an alternating ring which encloses part of the gamma chain. F(1) is attached to F(0) by a central stalk formed by the gamma and epsilon chains, while a peripheral stalk is formed by the delta, b and b' chains.

The protein localises to the plastid. Its subcellular location is the chloroplast thylakoid membrane. Functionally, f(1)F(0) ATP synthase produces ATP from ADP in the presence of a proton or sodium gradient. F-type ATPases consist of two structural domains, F(1) containing the extramembraneous catalytic core and F(0) containing the membrane proton channel, linked together by a central stalk and a peripheral stalk. During catalysis, ATP synthesis in the catalytic domain of F(1) is coupled via a rotary mechanism of the central stalk subunits to proton translocation. Its function is as follows. Component of the F(0) channel, it forms part of the peripheral stalk, linking F(1) to F(0). The polypeptide is ATP synthase subunit b, chloroplastic (Ochrosphaera neapolitana).